A 239-amino-acid chain; its full sequence is Skn-1 dependent zygotic transcript 1 protein (239 aa).

Expressed in mesendodermal precursor cells of embryos.

Functionally, may have a role in mesendoderm development during embryogenesis. The sequence is that of Skn-1 dependent zygotic transcript 1 protein (sdz-1) from Caenorhabditis elegans.